A 364-amino-acid polypeptide reads, in one-letter code: Histidinol-phosphate aminotransferase 2 (364 aa).

N6-(pyridoxal phosphate)lysine is present on Lys223.

Belongs to the class-II pyridoxal-phosphate-dependent aminotransferase family. Histidinol-phosphate aminotransferase subfamily. Homodimer. The cofactor is pyridoxal 5'-phosphate.

It carries out the reaction L-histidinol phosphate + 2-oxoglutarate = 3-(imidazol-4-yl)-2-oxopropyl phosphate + L-glutamate. It participates in amino-acid biosynthesis; L-histidine biosynthesis; L-histidine from 5-phospho-alpha-D-ribose 1-diphosphate: step 7/9. The chain is Histidinol-phosphate aminotransferase 2 (hisC2) from Oceanobacillus iheyensis (strain DSM 14371 / CIP 107618 / JCM 11309 / KCTC 3954 / HTE831).